A 216-amino-acid polypeptide reads, in one-letter code: DNA-directed RNA polymerase subunit alpha (216 aa).

This sequence belongs to the RNA polymerase alpha chain family. In terms of assembly, in plastids the minimal PEP RNA polymerase catalytic core is composed of four subunits: alpha, beta, beta', and beta''. When a (nuclear-encoded) sigma factor is associated with the core the holoenzyme is formed, which can initiate transcription.

Its subcellular location is the plastid. The protein localises to the chloroplast. The catalysed reaction is RNA(n) + a ribonucleoside 5'-triphosphate = RNA(n+1) + diphosphate. Its function is as follows. DNA-dependent RNA polymerase catalyzes the transcription of DNA into RNA using the four ribonucleoside triphosphates as substrates. The sequence is that of DNA-directed RNA polymerase subunit alpha (rpoA) from Euglena gracilis.